The sequence spans 277 residues: Carbonyl reductase [NADPH] 1 (277 aa).

Ser2 is modified (N-acetylserine). Ser2 carries the post-translational modification Phosphoserine. NADP(+) is bound by residues 10–34 (VTGA…GDVV), 63–64 (DI), and Asn90. Glutathione is bound by residues 95 to 97 (FKV) and Gln106. Ser140 contacts substrate. 193–194 (AY) provides a ligand contact to glutathione. Catalysis depends on Tyr194, which acts as the Proton acceptor. Residues 194–198 (YGVTK) and 231–233 (VRT) each bind NADP(+). Lys239 is modified (N6-1-carboxyethyl lysine). The disordered stretch occupies residues 258–277 (PPGAEGPHGQFVQDKKVEPW).

The protein belongs to the short-chain dehydrogenases/reductases (SDR) family. Monomer.

The protein localises to the cytoplasm. It catalyses the reaction a secondary alcohol + NADP(+) = a ketone + NADPH + H(+). The enzyme catalyses prostaglandin F2alpha + NADP(+) = prostaglandin E2 + NADPH + H(+). The catalysed reaction is prostaglandin E1 + NADP(+) = 15-oxoprostaglandin E1 + NADPH + H(+). It carries out the reaction menadione + NADPH + H(+) = menadiol + NADP(+). It catalyses the reaction prostaglandin D2 + NADP(+) = 15-oxoprostaglandin D2 + NADPH + H(+). The enzyme catalyses prostaglandin E2 + NADP(+) = 15-oxoprostaglandin E2 + NADPH + H(+). The catalysed reaction is prostaglandin F2alpha + NADP(+) = 15-oxoprostaglandin F2alpha + NADPH + H(+). It carries out the reaction daunorubicin + NADPH + H(+) = 13-dihydrodaunorubicin + NADP(+). It catalyses the reaction S-nitrosoglutathione + NADPH + H(+) = S-(hydroxysulfenamide)glutathione + NADP(+). The enzyme catalyses a primary alcohol + NADP(+) = an aldehyde + NADPH + H(+). The catalysed reaction is cortisol + NADPH + H(+) = 20beta-dihydrocortisol + NADP(+). It carries out the reaction corticosterone + NADPH + H(+) = 20beta-dihydrocorticosterone + NADP(+). In terms of biological role, NADPH-dependent reductase with broad substrate specificity. Catalyzes the reduction of a wide variety of carbonyl compounds including quinones, prostaglandins, menadione, plus various xenobiotics. Catalyzes the reduction of the antitumor anthracyclines doxorubicin and daunorubicin to the cardiotoxic compounds doxorubicinol and daunorubicinol. Can convert prostaglandin E to prostaglandin F2-alpha. Can bind glutathione, which explains its higher affinity for glutathione-conjugated substrates. Catalyzes the reduction of S-nitrosoglutathione. In addition, participates in the glucocorticoid metabolism by catalyzing the NADPH-dependent cortisol/corticosterone into 20beta-dihydrocortisol (20b-DHF) or 20beta-corticosterone (20b-DHB), which are weak agonists of NR3C1 and NR3C2 in adipose tissue. The polypeptide is Carbonyl reductase [NADPH] 1 (Rattus norvegicus (Rat)).